Here is an 842-residue protein sequence, read N- to C-terminus: Elongation factor 2 (842 aa).

The tr-type G domain maps to 17-253; sequence SNVRNMSVIA…LWGENYFNPK (237 aa). GTP is bound by residues 26–33, 104–108, and 158–161; these read AHVDHGKS, DSPGH, and NKVD. Phosphoserine is present on serine 568. Threonine 574 carries the post-translational modification Phosphothreonine. The residue at position 699 (histidine 699) is a Diphthamide.

It belongs to the TRAFAC class translation factor GTPase superfamily. Classic translation factor GTPase family. EF-G/EF-2 subfamily.

The protein localises to the cytoplasm. Functionally, catalyzes the GTP-dependent ribosomal translocation step during translation elongation. During this step, the ribosome changes from the pre-translocational (PRE) to the post-translocational (POST) state as the newly formed A-site-bound peptidyl-tRNA and P-site-bound deacylated tRNA move to the P and E sites, respectively. Catalyzes the coordinated movement of the two tRNA molecules, the mRNA and conformational changes in the ribosome. This chain is Elongation factor 2 (eft201), found in Schizosaccharomyces pombe (strain 972 / ATCC 24843) (Fission yeast).